The primary structure comprises 518 residues: 12S seed storage globulin 1 (518 aa).

The N-terminal stretch at 1–24 (MATTRFPSLLFYSCIFLLCNGSMA) is a signal peptide. Intrachain disulfides connect Cys-45/Cys-78 and Cys-121/Cys-324. Positions 50 to 240 (LQAFEPLRQV…ALGISQQAAQ (191 aa)) constitute a Cupin type-1 1 domain. The segment covering 281-295 (QSQQEQSTQYQVGQS) has biased composition (low complexity). Positions 281-311 (QSQQEQSTQYQVGQSPQYQEGQSTQYQSGQS) are disordered. Over residues 296-311 (PQYQEGQSTQYQSGQS) the composition is skewed to polar residues. The Cupin type-1 2 domain occupies 330-479 (QNIENPKRAD…AYRISRQESQ (150 aa)). Residues 496–518 (FAQTGSQSYQDEGESSSTEKASE) are disordered.

This sequence belongs to the 11S seed storage protein (globulins) family. As to quaternary structure, hexamer; each subunit is composed of an acidic and a basic chain derived from a single precursor and linked by a disulfide bond.

Functionally, this is a seed storage protein. This chain is 12S seed storage globulin 1, found in Avena sativa (Oat).